The following is a 282-amino-acid chain: 2-dehydro-3-deoxyphosphooctonate aldolase (282 aa).

The protein belongs to the KdsA family.

It localises to the cytoplasm. It carries out the reaction D-arabinose 5-phosphate + phosphoenolpyruvate + H2O = 3-deoxy-alpha-D-manno-2-octulosonate-8-phosphate + phosphate. It functions in the pathway carbohydrate biosynthesis; 3-deoxy-D-manno-octulosonate biosynthesis; 3-deoxy-D-manno-octulosonate from D-ribulose 5-phosphate: step 2/3. It participates in bacterial outer membrane biogenesis; lipopolysaccharide biosynthesis. The polypeptide is 2-dehydro-3-deoxyphosphooctonate aldolase (Shewanella halifaxensis (strain HAW-EB4)).